Here is a 66-residue protein sequence, read N- to C-terminus: Xenoxin-2 (66 aa).

4 disulfide bridges follow: cysteine 3/cysteine 24, cysteine 17/cysteine 37, cysteine 43/cysteine 58, and cysteine 59/cysteine 64.

Expressed by the skin dorsal glands.

It is found in the secreted. In terms of biological role, lacks alpha-neurotoxic activity, has apparently no antibacterial activity, nor anti-coagulant potency. In Xenopus laevis (African clawed frog), this protein is Xenoxin-2.